The following is a 58-amino-acid chain: Cholecystokinins (58 aa).

Residue tyrosine 52 is modified to Sulfotyrosine. Phenylalanine 58 bears the Phenylalanine amide mark.

This sequence belongs to the gastrin/cholecystokinin family. In terms of assembly, binds to CCK-A receptors in the pancreas and CCK-B receptors in the brain. cholecystokinin 8 binds CCK-A receptors more potently than cholecystokinin 58, cholecystokinin 8 and cholecystokinin 58 bind CCK-B receptors with equal affinity. The precursor is cleaved by proteases to produce a number of active cholecystokinins. In terms of processing, cholecystokinin 58 occurs in both sulfated (CCK58(s)) and nonsulfated (CCK58(ns)) forms, which differ in their receptor-binding activities. CCK58(s) binds to the CCK-A receptor with high affinity, CCK58(ns) binds poorly to the CCK-A receptor. CCK58(s) and CCK58(ns) both bind the CCK-B receptor. Post-translationally, the precursor is cleaved by ACE, which removes the Gly-Arg-Arg peptide at the C-terminus, leading to mature hormone.

The protein localises to the secreted. Its function is as follows. This peptide hormone induces gall bladder contraction and the release of pancreatic enzymes in the gut. Its function in the brain is not clear. Binding to CCK-A receptors stimulates amylase release from the pancreas, binding to CCK-B receptors stimulates gastric acid secretion. cholecystokinin 58 and cholecystokinin 8, but not cholecystokinin 58 desnonopeptide, stimulate amylase release from the pancreas. cholecystokinin 58, but not cholecystokinin 8, increases bile-pancreatic volume. The chain is Cholecystokinins from Canis lupus familiaris (Dog).